A 1226-amino-acid polypeptide reads, in one-letter code: E3 ubiquitin-protein ligase mind-bomb (1226 aa).

The segment covering 1 to 12 has biased composition (polar residues); it reads MSCAATLSSAKD. 2 disordered regions span residues 1 to 42 and 66 to 87; these read MSCA…NTNT and GGGGSLPGGTTSSSSASAAGGV. Gly residues predominate over residues 19–30; sequence SGGGGGGGGGGA. 2 stretches are compositionally biased toward low complexity: residues 31-42 and 73-86; these read PTNSNTNTNTNT and GGTTSSSSASAAGG. The MIB/HERC2 1 domain occupies 100-168; sequence VRRFSMEGVG…AYDLRILDSA (69 aa). The ZZ-type zinc finger occupies 174–226; sequence HEGTMCDTCRQQPIFGIRWKCAECINYDLCSICYHGDKHHLRHRFYRITTPGG. Zn(2+) contacts are provided by C179, C182, C194, C197, C203, C206, H212, and H216. The region spanning 237 to 315 is the MIB/HERC2 2 domain; that stretch reads SKKVLARGIF…MADLKVVNDA (79 aa). 8 ANK repeats span residues 567–596, 600–629, 633–662, 666–695, 699–731, 735–765, 769–798, and 802–833; these read AGHTALQAASQNGHIEVIQVLLRHAVDVEI, DGDRAVHHAAFGDEAAVIEILAKAGADLNA, RRQTSLHIAVNKGHLNVVKTLLTLGCHPSL, EGDTPLHDAISKEHDEMLSLLLDFGADITL, NGFNALHHAALKGNPSAMKILLTKTNRPWIVEE, DGYTALHLAALNNHVEIAELLVHMGKANMDR, NLQTALHLAVERQHVQIVKLLVQDGADLNI, and DGDTPLHEALRHHTLSQLKQLQDVEGFGKLLM. The segment at 890–919 is disordered; the sequence is TDDSELPGNVAGTSSSARARAASGSLNQSS. Over residues 900–914 the composition is skewed to low complexity; sequence AGTSSSARARAASGS. RING-type zinc fingers lie at residues 970–1005 and 1017–1052; these read CLVCSDAKRDTVFKPCGHVSCCETCAPRVKKCLICR and CLVCSDRRAAVFFRPCGHMVACEHCSALMKKCVLCR. A coiled-coil region spans residues 1159 to 1181; the sequence is VNNFQMDDVQKLKQQLQDIKEQT. An RING-type 3 zinc finger spans residues 1183-1216; sequence CPVCFDRIKNMVFLCGHGTCQMCGDQIEGCPICR.

As to quaternary structure, interacts with intracellular domain of Dl and Ser. In terms of tissue distribution, ubiquitous in the wing imaginal disk (at protein level).

The protein resides in the cytoplasm. It is found in the cell cortex. It carries out the reaction S-ubiquitinyl-[E2 ubiquitin-conjugating enzyme]-L-cysteine + [acceptor protein]-L-lysine = [E2 ubiquitin-conjugating enzyme]-L-cysteine + N(6)-ubiquitinyl-[acceptor protein]-L-lysine.. It functions in the pathway protein modification; protein ubiquitination. Functionally, E3 ubiquitin-protein ligase that mediates ubiquitination of Delta (Dl) and Serrate (Ser) receptors, which act as ligands of Notch proteins. Positively regulates the Notch signaling by ubiquitinating the intracellular domain of Dl and Ser, leading to endocytosis of Dl and Ser receptors. Regulates a subset of Notch signaling events, including wing margin specification, leg segmentation and vein determination, that are distinct from those events requiring neuralize (neur) activity. Also modulates lateral inhibition, a neur- and Dl-dependent signaling event, suggesting a distinct but partially complementary function with neur. The sequence is that of E3 ubiquitin-protein ligase mind-bomb (mib1) from Drosophila melanogaster (Fruit fly).